Here is a 2049-residue protein sequence, read N- to C-terminus: Kinetochore-associated protein rod-1 (2049 aa).

In terms of assembly, component of the RZZ complex composed of rod-1, czw-1 and zwl-1. Interacts (via N-terminus) with NDC80 complex component ndc-80.

Its subcellular location is the chromosome. The protein resides in the centromere. It localises to the kinetochore. The protein localises to the cytoplasm. It is found in the cytoskeleton. Its subcellular location is the spindle. Functionally, essential component of the mitotic checkpoint, which prevents cells from prematurely exiting mitosis. Required for chromosome segregation, the assembly of the dynein-dynactin and mdf-1-mdf-2 complexes onto kinetochores and spindle pole separation. Plays a role in nuclear envelope breakdown. Its function related to the spindle assembly machinery and kinetochore-microtubule attachments likely depends on its association in the mitotic RZZ complex. The RZZ complex recruits the spindly-like protein spdl-1 to kinetochores. To prevent irregular chromosome segregation, the complex also inhibits the attachment of the kinetochore-associated NDC80 complex to microtubules. The recruitment of spdl-1 to kinetochores relieves this inhibition. Required for embryonic development. This Caenorhabditis elegans protein is Kinetochore-associated protein rod-1.